Reading from the N-terminus, the 55-residue chain is Major pollen allergen Dac g 4 (55 aa).

In Dactylis glomerata (Orchard grass), this protein is Major pollen allergen Dac g 4.